Reading from the N-terminus, the 578-residue chain is Acyl-CoA ligase AFT1-1 (578 aa).

Residues 210–218 (SSGTSGAQK), 350–355 (QCYGAT), aspartate 438, arginine 457, and lysine 554 contribute to the ATP site. The tract at residues 281–350 (GVEDLLSIVE…RHHPTWKIKQ (70 aa)) is SBD1. Residues 351-413 (CYGATEAGTA…VSSPSLAIGY (63 aa)) form an SBD2 region. The Peroxisomal targeting signal type 1 signature appears at 576–578 (SKI).

This sequence belongs to the ATP-dependent AMP-binding enzyme family.

It localises to the peroxisome. It functions in the pathway mycotoxin biosynthesis. In terms of biological role, acyl-CoA ligase; part of the gene clusters that mediate the biosynthesis of the host-selective toxins (HSTs) AF-toxins responsible for Alternaria black spot of strawberry disease by the strawberry pathotype. AF-toxin I and III are valine derivatives of 2,3-dyhydroxy-isovaleric acid and 2-hydroxy-isovaleric acid respectively, while AF II is an isoleucine derivative of 2-hydroxy-valeric acid. These derivatives are bound to a 9,10-epoxy-8-hydroxy-9-methyl-decatrienoic acid (EDA) moiety. On cellular level, AF-toxins affect plasma membrane of susceptible cells and cause a sudden increase in loss of K(+) after a few minutes of toxin treatment. The aldo-keto reductase AFTS1 catalyzes the conversion of 2-keto-isovaleric acid (2-KIV) to 2-hydroxy-isovaleric acid (2-HIV) by reduction of its ketone to an alcohol. The acyl-CoA ligase AFT1, the hydrolase AFT2 and the enoyl-CoA hydratases AFT3 and AFT6, but also the polyketide synthase AFT9, the acyl-CoA dehydrogenase AFT10, the cytochrome P450 monooxygenase AFT11 and the oxidoreductase AFT12 are all involved in the biosynthesis of the AK-, AF- and ACT-toxin common EDA structural moiety. The exact role of each enzyme, and of additional enzymes identified within the AF-toxin clusters have still to be determined. This chain is Acyl-CoA ligase AFT1-1, found in Alternaria alternata (Alternaria rot fungus).